The sequence spans 205 residues: Rho-related protein racI (205 aa).

A GTP-binding site is contributed by 12–19 (GDSKTGKT). The Effector region signature appears at 34 to 42 (YVPSHVDAT). GTP contacts are provided by residues 59–63 (DSSAL) and 119–122 (TKCD). At C202 the chain carries Cysteine methyl ester. C202 carries S-geranylgeranyl cysteine lipidation. Residues 203–205 (IIQ) constitute a propeptide, removed in mature form.

This sequence belongs to the small GTPase superfamily. Rho family.

It localises to the cell membrane. This Dictyostelium discoideum (Social amoeba) protein is Rho-related protein racI (racI).